Here is a 300-residue protein sequence, read N- to C-terminus: uncharacterized protein (300 aa).

This is an uncharacterized protein from Ictalurid herpesvirus 1 (strain Auburn) (IcHV-1).